The following is a 129-amino-acid chain: Holo-[acyl-carrier-protein] synthase (129 aa).

Asp8 and Glu58 together coordinate Mg(2+).

It belongs to the P-Pant transferase superfamily. AcpS family. It depends on Mg(2+) as a cofactor.

Its subcellular location is the cytoplasm. The catalysed reaction is apo-[ACP] + CoA = holo-[ACP] + adenosine 3',5'-bisphosphate + H(+). Transfers the 4'-phosphopantetheine moiety from coenzyme A to a Ser of acyl-carrier-protein. The protein is Holo-[acyl-carrier-protein] synthase of Acidithiobacillus ferrooxidans (strain ATCC 53993 / BNL-5-31) (Leptospirillum ferrooxidans (ATCC 53993)).